The sequence spans 70 residues: Conotoxin AbVIC (70 aa).

The N-terminal stretch at 1–17 (VLIIAVLFLTACQLTTA) is a signal peptide. Residues 18–41 (ETSSRGKQKHRALRSTDKNSKLTR) constitute a propeptide that is removed on maturation. The disordered stretch occupies residues 19 to 41 (TSSRGKQKHRALRSTDKNSKLTR). Cystine bridges form between C43–C57, C50–C61, and C56–C68.

The protein belongs to the conotoxin O1 superfamily. Expressed by the venom duct.

The protein resides in the secreted. This is Conotoxin AbVIC from Conus abbreviatus (Abbreviated cone).